Consider the following 489-residue polypeptide: 3-octaprenyl-4-hydroxybenzoate carboxy-lyase (489 aa).

Residue asparagine 172 participates in Mn(2+) binding. Prenylated FMN-binding positions include 175–177, 189–191, and 194–195; these read IYR, RWL, and RG. Glutamate 238 contributes to the Mn(2+) binding site. Catalysis depends on aspartate 287, which acts as the Proton donor.

The protein belongs to the UbiD family. In terms of assembly, homohexamer. Prenylated FMN is required as a cofactor. The cofactor is Mn(2+).

The protein localises to the cell membrane. It carries out the reaction a 4-hydroxy-3-(all-trans-polyprenyl)benzoate + H(+) = a 2-(all-trans-polyprenyl)phenol + CO2. The protein operates within cofactor biosynthesis; ubiquinone biosynthesis. Functionally, catalyzes the decarboxylation of 3-octaprenyl-4-hydroxy benzoate to 2-octaprenylphenol, an intermediate step in ubiquinone biosynthesis. In Aeromonas salmonicida (strain A449), this protein is 3-octaprenyl-4-hydroxybenzoate carboxy-lyase.